The sequence spans 321 residues: MLTQQPSQRTDIQAADSTGSFNKRRRNSVFVTVTLLIVSSLIFTLGMAATTRTENVTVGGYYPGVILGFGSILGIIGSNLIENKRQMLVASIVFISFGVIAAFCCAIVDGVFAARHLDLRPLYAGKCRYHSTTHNDHTTEVTCQQPMRNPCVLKIRSNTCYCCDLYNCGRIGNSGLYYEYTDVKSCQDVVHLYHLLWSVTILNIVGLFLGIITAAVLGGFKDMNPALPAISCIAETPRPTVQYNTRPAVPSYNTYYHSTPHLPPYTAYDLQHSSVFPASTPSGLSDDPNGQASSFMWPSNAPPRYSPPYFPPDEKPPPYTP.

The next 4 helical transmembrane spans lie at 29–49, 56–76, 88–108, and 200–220; these read VFVT…GMAA, VTVG…LGII, LVAS…CAIV, and TILN…LGGF. Over residues 279-297 the composition is skewed to polar residues; the sequence is STPSGLSDDPNGQASSFMW. Positions 279–300 are disordered; that stretch reads STPSGLSDDPNGQASSFMWPSN.

This sequence belongs to the TMEM255 family.

It is found in the membrane. The sequence is that of Transmembrane protein 255A (tmem255a) from Xenopus laevis (African clawed frog).